The chain runs to 340 residues: NADH-quinone oxidoreductase subunit H (340 aa).

Transmembrane regions (helical) follow at residues 4–24 (TIGI…PLLL), 78–98 (YLFV…WAVI), 113–133 (VLYL…AGWA), 151–171 (VSYE…AGSM), 184–204 (MLHW…IAGI), 244–264 (SMIL…LSPF), 273–293 (IFFV…FLFV), and 316–336 (VLIP…VAHV).

It belongs to the complex I subunit 1 family. NDH-1 is composed of 14 different subunits. Subunits NuoA, H, J, K, L, M, N constitute the membrane sector of the complex.

The protein localises to the cell inner membrane. It catalyses the reaction a quinone + NADH + 5 H(+)(in) = a quinol + NAD(+) + 4 H(+)(out). Functionally, NDH-1 shuttles electrons from NADH, via FMN and iron-sulfur (Fe-S) centers, to quinones in the respiratory chain. The immediate electron acceptor for the enzyme in this species is believed to be ubiquinone. Couples the redox reaction to proton translocation (for every two electrons transferred, four hydrogen ions are translocated across the cytoplasmic membrane), and thus conserves the redox energy in a proton gradient. This subunit may bind ubiquinone. This Legionella pneumophila (strain Paris) protein is NADH-quinone oxidoreductase subunit H.